Reading from the N-terminus, the 353-residue chain is Probable arabinan endo-1,5-alpha-L-arabinosidase B (353 aa).

The signal sequence occupies residues Met1 to Cys16. The active-site Proton acceptor is Asp39. Asn194 is a glycosylation site (N-linked (GlcNAc...) asparagine). The interval His202–Ser227 is disordered. Residue Glu233 is the Proton donor of the active site.

The protein belongs to the glycosyl hydrolase 43 family.

The protein resides in the secreted. The catalysed reaction is Endohydrolysis of (1-&gt;5)-alpha-arabinofuranosidic linkages in (1-&gt;5)-arabinans.. It functions in the pathway glycan metabolism; L-arabinan degradation. Functionally, endo-1,5-alpha-L-arabinanase involved in degradation of pectin. Its preferred substrate is linear 1,5-alpha-L-arabinan. This is Probable arabinan endo-1,5-alpha-L-arabinosidase B (abnB) from Aspergillus oryzae (strain ATCC 42149 / RIB 40) (Yellow koji mold).